We begin with the raw amino-acid sequence, 49 residues long: Light-harvesting protein B-875 beta chain (49 aa).

Over 2 to 27 (ADKSDLGYTGLTDEQAQELHSVYMSG) the chain is Cytoplasmic. Residues His21 and His39 each contribute to the a bacteriochlorophyll site. Residues 28–45 (LWPFSAVAIVAHLAVYIW) form a helical; Signal-anchor for type II membrane protein membrane-spanning segment. The Periplasmic segment spans residues 46–49 (RPWF).

Belongs to the antenna complex beta subunit family. The core complex is formed by different alpha and beta chains, binding bacteriochlorophyll molecules, and arranged most probably in tetrameric structures disposed around the reaction center. The non-pigmented gamma chains may constitute additional components.

The protein resides in the cell inner membrane. Functionally, antenna complexes are light-harvesting systems, which transfer the excitation energy to the reaction centers. In Cereibacter sphaeroides (Rhodobacter sphaeroides), this protein is Light-harvesting protein B-875 beta chain (pufB).